The sequence spans 366 residues: Alanine racemase (366 aa).

K35 serves as the catalytic Proton acceptor; specific for D-alanine. K35 is modified (N6-(pyridoxal phosphate)lysine). Residue R130 participates in substrate binding. The active-site Proton acceptor; specific for L-alanine is Y254. M302 is a binding site for substrate.

It belongs to the alanine racemase family. Pyridoxal 5'-phosphate serves as cofactor.

The enzyme catalyses L-alanine = D-alanine. The protein operates within amino-acid biosynthesis; D-alanine biosynthesis; D-alanine from L-alanine: step 1/1. Its function is as follows. Catalyzes the interconversion of L-alanine and D-alanine. May also act on other amino acids. The sequence is that of Alanine racemase (alr) from Variovorax paradoxus (strain S110).